A 182-amino-acid chain; its full sequence is Malignant T-cell-amplified sequence 1 homolog (182 aa).

One can recognise a PUA domain in the interval V93 to N172.

The protein belongs to the MCTS1 family. As to quaternary structure, interacts with DENR.

Its subcellular location is the cytoplasm. Functionally, regulates translation as part of a complex with DENR. Specifically required for translational re-initiation in mRNAs containing upstream open reading frames (uORFs). Not required for standard translational initiation. Regulates expression of a subset of gene products including mbc, InR and EcR. The protein is Malignant T-cell-amplified sequence 1 homolog of Drosophila melanogaster (Fruit fly).